A 1116-amino-acid chain; its full sequence is Protein STICHEL-like 1 (1116 aa).

Disordered regions lie at residues 95–138 (RTSS…LEET) and 225–244 (KFLR…NSTP). Residues 115–124 (NDDDDDDDDV) show a composition bias toward acidic residues. 2 short sequence motifs (PEST) span residues 257–282 (RNPS…FKGR) and 402–422 (KSQD…ESIQ). 463–470 (GPRGTGKT) contributes to the ATP binding site. 4 residues coordinate Zn(2+): Cys482, Cys492, Cys495, and Cys498. Residues 726 to 760 (EAFLDRRNLTEADLERLKHALKLLSEAEKQLRVST) are a coiled coil. Residues 777–798 (PSPGTTHTGSSRRQSSRATEES) are disordered. The segment covering 778 to 793 (SPGTTHTGSSRRQSSR) has biased composition (polar residues).

It belongs to the DnaX/STICHEL family.

This Arabidopsis thaliana (Mouse-ear cress) protein is Protein STICHEL-like 1.